The primary structure comprises 230 residues: Endonuclease NucS (230 aa).

This sequence belongs to the NucS endonuclease family.

It is found in the cytoplasm. Its function is as follows. Cleaves both 3' and 5' ssDNA extremities of branched DNA structures. The sequence is that of Endonuclease NucS from Corynebacterium glutamicum (strain R).